A 277-amino-acid chain; its full sequence is 4-hydroxy-3-methylbut-2-enyl diphosphate reductase (277 aa).

A [4Fe-4S] cluster-binding site is contributed by C12. The (2E)-4-hydroxy-3-methylbut-2-enyl diphosphate site is built by H36 and H70. Dimethylallyl diphosphate contacts are provided by H36 and H70. Isopentenyl diphosphate-binding residues include H36 and H70. C92 provides a ligand contact to [4Fe-4S] cluster. (2E)-4-hydroxy-3-methylbut-2-enyl diphosphate is bound at residue H120. H120 is a binding site for dimethylallyl diphosphate. H120 provides a ligand contact to isopentenyl diphosphate. Catalysis depends on E122, which acts as the Proton donor. T158 contacts (2E)-4-hydroxy-3-methylbut-2-enyl diphosphate. C186 serves as a coordination point for [4Fe-4S] cluster. Residues S214, N216, and S258 each contribute to the (2E)-4-hydroxy-3-methylbut-2-enyl diphosphate site. S214, N216, and S258 together coordinate dimethylallyl diphosphate. Residues S214, N216, and S258 each contribute to the isopentenyl diphosphate site.

Belongs to the IspH family. [4Fe-4S] cluster serves as cofactor.

It catalyses the reaction isopentenyl diphosphate + 2 oxidized [2Fe-2S]-[ferredoxin] + H2O = (2E)-4-hydroxy-3-methylbut-2-enyl diphosphate + 2 reduced [2Fe-2S]-[ferredoxin] + 2 H(+). The enzyme catalyses dimethylallyl diphosphate + 2 oxidized [2Fe-2S]-[ferredoxin] + H2O = (2E)-4-hydroxy-3-methylbut-2-enyl diphosphate + 2 reduced [2Fe-2S]-[ferredoxin] + 2 H(+). It participates in isoprenoid biosynthesis; dimethylallyl diphosphate biosynthesis; dimethylallyl diphosphate from (2E)-4-hydroxy-3-methylbutenyl diphosphate: step 1/1. The protein operates within isoprenoid biosynthesis; isopentenyl diphosphate biosynthesis via DXP pathway; isopentenyl diphosphate from 1-deoxy-D-xylulose 5-phosphate: step 6/6. Functionally, catalyzes the conversion of 1-hydroxy-2-methyl-2-(E)-butenyl 4-diphosphate (HMBPP) into a mixture of isopentenyl diphosphate (IPP) and dimethylallyl diphosphate (DMAPP). Acts in the terminal step of the DOXP/MEP pathway for isoprenoid precursor biosynthesis. In Campylobacter jejuni subsp. jejuni serotype O:2 (strain ATCC 700819 / NCTC 11168), this protein is 4-hydroxy-3-methylbut-2-enyl diphosphate reductase.